The chain runs to 217 residues: Ras-related protein Rab-19 (217 aa).

11 residues coordinate GTP: S26, V28, G29, K30, T31, C32, Y42, T43, E44, T45, and T49. T31 provides a ligand contact to Mg(2+). Positions 39–54 (SGVYTETQQNTIGVDF) match the Switch 1 motif. The Mg(2+) site is built by T49 and D72. A Switch 2 motif is present at residues 74–89 (AGQERFRTITQSYYRS). The GTP site is built by G75, N130, K131, D133, S161, A162, and K163. Residues C215 and C217 are each lipidated (S-geranylgeranyl cysteine). Residue C217 is modified to Cysteine methyl ester.

This sequence belongs to the small GTPase superfamily. Rab family. It depends on Mg(2+) as a cofactor.

Its subcellular location is the cell membrane. The catalysed reaction is GTP + H2O = GDP + phosphate + H(+). Regulated by guanine nucleotide exchange factors (GEFs) which promote the exchange of bound GDP for free GTP. Regulated by GTPase activating proteins (GAPs) which increase the GTP hydrolysis activity. Inhibited by GDP dissociation inhibitors (GDIs). Its function is as follows. The small GTPases Rab are key regulators of intracellular membrane trafficking, from the formation of transport vesicles to their fusion with membranes. Rabs cycle between an inactive GDP-bound form and an active GTP-bound form that is able to recruit to membranes different set of downstream effectors directly responsible for vesicle formation, movement, tethering and fusion. This is Ras-related protein Rab-19 from Homo sapiens (Human).